We begin with the raw amino-acid sequence, 99 residues long: Nucleoid-associated protein UUR10_0100 (99 aa).

This sequence belongs to the YbaB/EbfC family. In terms of assembly, homodimer.

It localises to the cytoplasm. Its subcellular location is the nucleoid. Its function is as follows. Binds to DNA and alters its conformation. May be involved in regulation of gene expression, nucleoid organization and DNA protection. The polypeptide is Nucleoid-associated protein UUR10_0100 (Ureaplasma urealyticum serovar 10 (strain ATCC 33699 / Western)).